A 205-amino-acid polypeptide reads, in one-letter code: MIQAGVVAVQGDVSEHAAAIRRAGESHSISVEIVEIRQSGVVPDCDVLLIPGGESTAISRLLDREGIDTEIQAHVEAGKPVLATCAGLIIAARDAKDDRVETLDIIDVTVDRNAFGRQIDSFEAPLDVDGLDEPFPAVFIRAPVIDAAGEDATVLAQWEDNPVAVQDGAVVATAFHPELTPDSRIHDLAFFANQNNNVDTAVSTD.

An L-glutamine-binding site is contributed by 53-55 (GES). Cys85 (nucleophile) is an active-site residue. L-glutamine contacts are provided by residues Arg112 and 140–141 (IR). Catalysis depends on charge relay system residues His176 and Glu178.

Belongs to the glutaminase PdxT/SNO family. As to quaternary structure, in the presence of PdxS, forms a dodecamer of heterodimers. Only shows activity in the heterodimer.

It carries out the reaction aldehydo-D-ribose 5-phosphate + D-glyceraldehyde 3-phosphate + L-glutamine = pyridoxal 5'-phosphate + L-glutamate + phosphate + 3 H2O + H(+). The enzyme catalyses L-glutamine + H2O = L-glutamate + NH4(+). The protein operates within cofactor biosynthesis; pyridoxal 5'-phosphate biosynthesis. In terms of biological role, catalyzes the hydrolysis of glutamine to glutamate and ammonia as part of the biosynthesis of pyridoxal 5'-phosphate. The resulting ammonia molecule is channeled to the active site of PdxS. The sequence is that of Pyridoxal 5'-phosphate synthase subunit PdxT from Haloquadratum walsbyi (strain DSM 16790 / HBSQ001).